The following is a 178-amino-acid chain: Large ribosomal subunit protein uL6 (178 aa).

This sequence belongs to the universal ribosomal protein uL6 family. Part of the 50S ribosomal subunit.

This protein binds to the 23S rRNA, and is important in its secondary structure. It is located near the subunit interface in the base of the L7/L12 stalk, and near the tRNA binding site of the peptidyltransferase center. The sequence is that of Large ribosomal subunit protein uL6 from Streptococcus pneumoniae serotype 19F (strain G54).